The chain runs to 170 residues: Phosphopantetheine adenylyltransferase (170 aa).

Residue threonine 17 coordinates substrate. ATP-binding positions include 17–18 (TF) and histidine 25. Substrate is bound by residues lysine 49, leucine 81, and arginine 95. Residues 96 to 98 (GLR), glutamate 106, and 131 to 137 (LMYISST) contribute to the ATP site.

It belongs to the bacterial CoaD family. In terms of assembly, homohexamer. It depends on Mg(2+) as a cofactor.

It is found in the cytoplasm. The enzyme catalyses (R)-4'-phosphopantetheine + ATP + H(+) = 3'-dephospho-CoA + diphosphate. It functions in the pathway cofactor biosynthesis; coenzyme A biosynthesis; CoA from (R)-pantothenate: step 4/5. Its function is as follows. Reversibly transfers an adenylyl group from ATP to 4'-phosphopantetheine, yielding dephospho-CoA (dPCoA) and pyrophosphate. The chain is Phosphopantetheine adenylyltransferase from Legionella pneumophila subsp. pneumophila (strain Philadelphia 1 / ATCC 33152 / DSM 7513).